Reading from the N-terminus, the 568-residue chain is COMPASS component cclA (568 aa).

Residues 1-113 form a disordered region; sequence MASDSGTPPP…MRYKLAPPKP (113 aa). Basic and acidic residues-rich tracts occupy residues 68-77 and 89-98; these read KESLKKRESK and PDPKHREPKQ. The B30.2/SPRY domain maps to 160-353; that stretch reads ADPGFPSSLY…IPIRFKQHIY (194 aa).

This sequence belongs to the cclA family. As to quaternary structure, component of the COMPASS complex.

It localises to the nucleus. The protein localises to the chromosome. The protein resides in the telomere. In terms of biological role, component of the COMPASS (Set1C) complex that specifically mono-, di- and trimethylates histone H3 to form H3K4me1/2/3, which subsequently plays a role in telomere length maintenance and transcription elongation regulation. Controls the production of several secondary metabolites, including colletochlorins, higginsianins and sclerosporide. Plays a key role in mycelial growth, sporulation, spore germination and virulence. This Colletotrichum higginsianum (strain IMI 349063) (Crucifer anthracnose fungus) protein is COMPASS component cclA.